Consider the following 458-residue polypeptide: Protein RICE SALT SENSITIVE 3 (458 aa).

Positions 1-17 are enriched in gly residues; it reads MVGSGAAGGGGGGGGGG. 4 disordered regions span residues 1 to 21, 220 to 325, 354 to 374, and 386 to 458; these read MVGSGAAGGGGGGGGGGDHAR, TSPS…PEGD, GGGADDGSKTAAAAQDAGHGG, and SHSN…TFLE. A compositionally biased stretch (low complexity) spans 220-232; sequence TSPSPSSFPLKQQ. Residues 245-262 are compositionally biased toward pro residues; sequence HAPPQLPPGASPLFPPGP. A compositionally biased stretch (low complexity) spans 308 to 317; the sequence is QQPMAAPQQH. The segment covering 413–436 has biased composition (low complexity); sequence SSSTTSTSPSVSASTAPAPPQQQQ.

In terms of assembly, interacts with BHLH094, BHLH089, TIFY11A/JAZ9 and TIFY11C/JAZ11. Forms a ternary complex with TIFY11A/JAZ9 and BHLH094 in the nucleus. Expressed in root tips. Expressed at high levels in the meristematic zone and at low levels in the elongation zone of the root tip.

It is found in the nucleus. Its subcellular location is the cytoplasm. In terms of biological role, involved in the repression of jasmonate (JA)-induced genes. Forms a ternary complex with TIFY11A/JAZ9 and BHLH094 to negatively regulate JA-responsive genes. Involved in transcriptional regulation in the root tip. Plays a regulatory role in root cell elongation. Regulates root cell elongation during salt stress. In Oryza sativa subsp. japonica (Rice), this protein is Protein RICE SALT SENSITIVE 3.